Consider the following 366-residue polypeptide: Anthranilate phosphoribosyltransferase (366 aa).

5-phospho-alpha-D-ribose 1-diphosphate is bound by residues Gly79, 82–83, Thr87, 89–92, 107–115, and Ser119; these read GD, NIST, and KHGNRAATS. Residue Gly79 participates in anthranilate binding. Ser91 serves as a coordination point for Mg(2+). Asn110 is a binding site for anthranilate. Arg165 provides a ligand contact to anthranilate. Residues Asp223 and Glu224 each coordinate Mg(2+). The interval 342–366 is disordered; sequence ESLSGKSMSMRSRTSILSPASGERV. Positions 345-359 are enriched in polar residues; it reads SGKSMSMRSRTSILS.

This sequence belongs to the anthranilate phosphoribosyltransferase family. As to quaternary structure, homodimer. Requires Mg(2+) as cofactor.

The enzyme catalyses N-(5-phospho-beta-D-ribosyl)anthranilate + diphosphate = 5-phospho-alpha-D-ribose 1-diphosphate + anthranilate. It participates in amino-acid biosynthesis; L-tryptophan biosynthesis; L-tryptophan from chorismate: step 2/5. Its function is as follows. Catalyzes the transfer of the phosphoribosyl group of 5-phosphorylribose-1-pyrophosphate (PRPP) to anthranilate to yield N-(5'-phosphoribosyl)-anthranilate (PRA). The protein is Anthranilate phosphoribosyltransferase of Methanosarcina barkeri (strain Fusaro / DSM 804).